The following is a 192-amino-acid chain: Pyridoxal 5'-phosphate synthase subunit PdxT (192 aa).

53 to 55 provides a ligand contact to L-glutamine; the sequence is GES. C82 functions as the Nucleophile in the catalytic mechanism. Residues R108 and 134–135 each bind L-glutamine; that span reads IR. Active-site charge relay system residues include H170 and E172.

This sequence belongs to the glutaminase PdxT/SNO family. As to quaternary structure, in the presence of PdxS, forms a dodecamer of heterodimers. Only shows activity in the heterodimer.

The enzyme catalyses aldehydo-D-ribose 5-phosphate + D-glyceraldehyde 3-phosphate + L-glutamine = pyridoxal 5'-phosphate + L-glutamate + phosphate + 3 H2O + H(+). It catalyses the reaction L-glutamine + H2O = L-glutamate + NH4(+). It functions in the pathway cofactor biosynthesis; pyridoxal 5'-phosphate biosynthesis. Catalyzes the hydrolysis of glutamine to glutamate and ammonia as part of the biosynthesis of pyridoxal 5'-phosphate. The resulting ammonia molecule is channeled to the active site of PdxS. The polypeptide is Pyridoxal 5'-phosphate synthase subunit PdxT (Methanosphaera stadtmanae (strain ATCC 43021 / DSM 3091 / JCM 11832 / MCB-3)).